The sequence spans 423 residues: Tegument protein UL43 (423 aa).

The segment covering 1-12 (MEKTPAETTAVS) has biased composition (polar residues). Residues 1–46 (MEKTPAETTAVSAGNVPRDSIPCITNVSADTRGRTRPSRPATVPQR) form a disordered region.

It belongs to the herpesviridae US22 family.

The protein resides in the virion tegument. The polypeptide is Tegument protein UL43 (UL43) (Homo sapiens (Human)).